The chain runs to 1047 residues: Isoleucine--tRNA ligase (1047 aa).

The 'HIGH' region signature appears at 52 to 62 (PTANGMPGAHH). A 'KMSKS' region motif is present at residues 600–604 (KMSKH). Lysine 603 lines the ATP pocket.

The protein belongs to the class-I aminoacyl-tRNA synthetase family. IleS type 2 subfamily. Monomer. The cofactor is Zn(2+).

The protein resides in the cytoplasm. It catalyses the reaction tRNA(Ile) + L-isoleucine + ATP = L-isoleucyl-tRNA(Ile) + AMP + diphosphate. Its function is as follows. Catalyzes the attachment of isoleucine to tRNA(Ile). As IleRS can inadvertently accommodate and process structurally similar amino acids such as valine, to avoid such errors it has two additional distinct tRNA(Ile)-dependent editing activities. One activity is designated as 'pretransfer' editing and involves the hydrolysis of activated Val-AMP. The other activity is designated 'posttransfer' editing and involves deacylation of mischarged Val-tRNA(Ile). The protein is Isoleucine--tRNA ligase of Streptomyces avermitilis (strain ATCC 31267 / DSM 46492 / JCM 5070 / NBRC 14893 / NCIMB 12804 / NRRL 8165 / MA-4680).